A 414-amino-acid chain; its full sequence is MEFVKDLKTPEDYINNELKYGAHNYDPIPVVLKRAKGVFVYDVNDKRYYDFLSAYSSVNQGHCHPDILNAMINQAKNLTICSRAFFSVSLGICERYLTNLLGYDKVLMMNTGAEANETAYKLCRKWGYEVKKIPENMAKIVVCKNNFSGRTLGCISASTTNKCTSNFGPFAPQFSKVPYNDLEALEEELKDPNVCGFIVEPVQGEAGVIVPSDNYLPGVYNLCKKYNVLFVADEVQTGLGRTGKLLCVHHYNVKPDVVLLGKALSGGHYPISAVLANDSVMLVIKPGEHGSTYGGNPLAASICVESLNVLINEKLCENADKLGGPFLEGLKKELKDSKIIRDIRGKGLLCAIEFKNELVNVLDICLKLKENGLITRDVHDKTIRLTPPLCITKEQLDECTEIIVKTVKFFDEKF.

An intrachain disulfide couples cysteine 154 to cysteine 163. Lysine 262 is modified (N6-(pyridoxal phosphate)lysine).

This sequence belongs to the class-III pyridoxal-phosphate-dependent aminotransferase family. In terms of assembly, homodimer. Requires pyridoxal 5'-phosphate as cofactor. In terms of processing, the disulfide bond between Cys-154 and Cys-163 is reduced by TRX1 which increases OAT catalytic activity.

The protein resides in the cytoplasm. It catalyses the reaction a 2-oxocarboxylate + L-ornithine = L-glutamate 5-semialdehyde + an L-alpha-amino acid. It carries out the reaction L-ornithine + 2-oxoglutarate = L-glutamate 5-semialdehyde + L-glutamate. It functions in the pathway amino-acid biosynthesis; L-proline biosynthesis; L-glutamate 5-semialdehyde from L-ornithine: step 1/1. With respect to regulation, unlike for mammalian OATs, activity is increased by TRX1-mediated reduction of the disulfide bond between Cys-154 and Cys-163. Binding to TRX1 may also induce conformational changes that facilitate substrate binding. Functionally, catalyzes the transamination of alpha-ketoglutarate with ornithine or N-acetylornithine and of glutamate-5-semialdehyde with glutamate and alanine. The sequence is that of Ornithine aminotransferase from Plasmodium chabaudi chabaudi.